The following is a 277-amino-acid chain: Pantothenate synthetase (277 aa).

Residue 26–33 (MGNLHEGH) coordinates ATP. H33 acts as the Proton donor in catalysis. Q57 serves as a coordination point for (R)-pantoate. A beta-alanine-binding site is contributed by Q57. An ATP-binding site is contributed by 144–147 (GKKD). Q150 serves as a coordination point for (R)-pantoate. ATP-binding positions include V173 and 181–184 (LSSR).

It belongs to the pantothenate synthetase family. As to quaternary structure, homodimer.

The protein resides in the cytoplasm. The catalysed reaction is (R)-pantoate + beta-alanine + ATP = (R)-pantothenate + AMP + diphosphate + H(+). It functions in the pathway cofactor biosynthesis; (R)-pantothenate biosynthesis; (R)-pantothenate from (R)-pantoate and beta-alanine: step 1/1. Catalyzes the condensation of pantoate with beta-alanine in an ATP-dependent reaction via a pantoyl-adenylate intermediate. This Paraburkholderia phymatum (strain DSM 17167 / CIP 108236 / LMG 21445 / STM815) (Burkholderia phymatum) protein is Pantothenate synthetase.